Here is a 168-residue protein sequence, read N- to C-terminus: Thiol peroxidase (168 aa).

Positions 19–168 (PQAGSKAQTF…YEAALAVLKA (150 aa)) constitute a Thioredoxin domain. Residue cysteine 61 is the Cysteine sulfenic acid (-SOH) intermediate of the active site. A disulfide bridge connects residues cysteine 61 and cysteine 95.

The protein belongs to the peroxiredoxin family. Tpx subfamily. Homodimer.

It catalyses the reaction a hydroperoxide + [thioredoxin]-dithiol = an alcohol + [thioredoxin]-disulfide + H2O. Functionally, thiol-specific peroxidase that catalyzes the reduction of hydrogen peroxide and organic hydroperoxides to water and alcohols, respectively. Plays a role in cell protection against oxidative stress by detoxifying peroxides. The sequence is that of Thiol peroxidase from Shigella dysenteriae.